Here is a 341-residue protein sequence, read N- to C-terminus: Pectate trisaccharide-lyase (341 aa).

Residues 1–27 form the signal peptide; it reads MKKLISIIFIFVLGVVGSLTAAVSAEA. The propeptide occupies 28-39; the sequence is ASALNSGKVNPL. 2 PbH1 repeats span residues 131–156 and 158–186; these read ANNIIIRNLKIHEVASGDKDAIGIEG and SKNIWVDHNELYHSLNVDKDYYDGLFDVK. Residues D150, D180, and D184 each coordinate Ca(2+). R233 is an active-site residue. PbH1 repeat units follow at residues 262–283 and 287–322; these read GARIRIENNLFENAKDPIVSWY and PGYWHVSNNKFVNSRGSMPTTSTTTYNPPYSYSLDN.

The protein belongs to the polysaccharide lyase 1 family. The cofactor is Ca(2+).

The protein localises to the secreted. The enzyme catalyses eliminative cleavage of unsaturated trigalacturonate as the major product from the reducing end of polygalacturonic acid/pectate.. Cleaves unsaturated oligo-galacturonides from pectin. The major product is trigalacturonate; digalacturonate and tetragalacturonate are also produced. Activity on methylated pectins decreases with an increasing degree of methylation. The protein is Pectate trisaccharide-lyase of Bacillus licheniformis (strain ATCC 14580 / DSM 13 / JCM 2505 / CCUG 7422 / NBRC 12200 / NCIMB 9375 / NCTC 10341 / NRRL NRS-1264 / Gibson 46).